The chain runs to 122 residues: Small ribosomal subunit protein uS13 (122 aa).

Residues 99–122 (RGQRTHTNARTRKGPAKAIAGKKK) form a disordered region.

It belongs to the universal ribosomal protein uS13 family. In terms of assembly, part of the 30S ribosomal subunit. Forms a loose heterodimer with protein S19. Forms two bridges to the 50S subunit in the 70S ribosome.

Located at the top of the head of the 30S subunit, it contacts several helices of the 16S rRNA. In the 70S ribosome it contacts the 23S rRNA (bridge B1a) and protein L5 of the 50S subunit (bridge B1b), connecting the 2 subunits; these bridges are implicated in subunit movement. Contacts the tRNAs in the A and P-sites. The chain is Small ribosomal subunit protein uS13 from Rhodopseudomonas palustris (strain TIE-1).